We begin with the raw amino-acid sequence, 294 residues long: Acetylglutamate kinase (294 aa).

Residues 64-65 (GG), arginine 86, and asparagine 189 each bind substrate.

This sequence belongs to the acetylglutamate kinase family. ArgB subfamily.

The protein resides in the cytoplasm. It catalyses the reaction N-acetyl-L-glutamate + ATP = N-acetyl-L-glutamyl 5-phosphate + ADP. It functions in the pathway amino-acid biosynthesis; L-arginine biosynthesis; N(2)-acetyl-L-ornithine from L-glutamate: step 2/4. Functionally, catalyzes the ATP-dependent phosphorylation of N-acetyl-L-glutamate. This Carboxydothermus hydrogenoformans (strain ATCC BAA-161 / DSM 6008 / Z-2901) protein is Acetylglutamate kinase.